The sequence spans 1274 residues: Paired amphipathic helix protein Sin3a (1274 aa).

Disordered stretches follow at residues 1–26 (MKRRLDDQESPVYAAQQRRIPGSTEA) and 85–110 (HHHPTAVQPHGGQVVQSHAHPAPPVA). Residue Ser-10 is modified to Phosphoserine. One can recognise a PAH 1 domain in the interval 119-189 (QRLKVEDALS…MGFNTFLPPG (71 aa)). The tract at residues 119 to 196 (QRLKVEDALS…PPGYKIEVQT (78 aa)) is interaction with HCFC1. Residues Lys-122 and Lys-134 each participate in a glycyl lysine isopeptide (Lys-Gly) (interchain with G-Cter in SUMO2) cross-link. Residues 205–297 (PGQVHQIPTH…ISLGTAPSLQ (93 aa)) are disordered. The interaction with REST stretch occupies residues 205-479 (PGQVHQIPTH…KVRKALRSAE (275 aa)). Low complexity predominate over residues 228–237 (SQPSSQSAPT). Positions 252–266 (KPSQLQAHTPASQQT) are enriched in polar residues. The span at 267–282 (PPLPPYASPRSPPVQP) shows a compositional bias: pro residues. Ser-277 is subject to Phosphoserine. Thr-284 is modified (phosphothreonine). Residues 284-297 (TPVTISLGTAPSLQ) show a composition bias toward polar residues. In terms of domain architecture, PAH 2 spans 300–383 (QPVEFNHAIN…SEFGQFLPDA (84 aa)). Residues 398–443 (DSVRNDHGGTVKKPQLNNKPQRPSQNGCQIRRHSGTGATPPVKKKP) are disordered. Positions 412-425 (QLNNKPQRPSQNGC) are enriched in polar residues. Residues 457 to 526 (SKHGVGTESL…NWFKNFLGYK (70 aa)) enclose the PAH 3 domain. Residues 459 to 526 (HGVGTESLFF…NWFKNFLGYK (68 aa)) are interaction with SAP30. Lys-470 carries the N6-acetyllysine modification. The tract at residues 524-851 (GYKESVHLES…EMDVDEATGA (328 aa)) is interaction with NCOR1. The segment at 525 to 660 (YKESVHLESF…KFRLDNTLGG (136 aa)) is interactions with SUDS3 and SAP130. Residue Lys-564 forms a Glycyl lysine isopeptide (Lys-Gly) (interchain with G-Cter in SUMO2) linkage. Residues 688 to 830 (NPSIAVPIVL…IPDLLFAQRG (143 aa)) are interactions with HDAC1 and ARID4B. Ser-833 bears the Phosphoserine mark. Residues 835–847 (VEEEEEEEMDVDE) are compositionally biased toward acidic residues. The disordered stretch occupies residues 835 to 865 (VEEEEEEEMDVDEATGAPKKHNGVGGSPPKS). Residue Ser-861 is modified to Phosphoserine. An N6-acetyllysine mark is found at Lys-866 and Lys-876. The tract at residues 889–968 (VNNNWYIFMR…YYPAFLDMVR (80 aa)) is interaction with OGT. Residues 904–933 (CLRLLRICSQAERQIEEENREREWEREVLG) are a coiled coil. Phosphoserine occurs at positions 941, 1090, and 1113. Residues 1137-1157 (CQRGREQQEKEGKEGNSKKTM) are disordered. Residues 1139–1157 (RGREQQEKEGKEGNSKKTM) are compositionally biased toward basic and acidic residues.

As to quaternary structure, interacts with ARID4B, BRMS1L, HCFC1, HDAC1, HDAC2, MXI1, SAP30L, SAP130, SFPQ and TOPORS. Interacts with OGT (via TPRs 1-6); the interaction mediates transcriptional repression in parallel with histone deacetylase. Interacts with BAZ2A, MXD1, MXD3, MXD4, MBD2, DACH1, NCOR1, NR4A2, REST, RLIM, SAP30, SETDB1, SMYD2, and SUDS3. Interacts with PHF12 in a complex composed of HDAC1, PHF12 and SAP30. Interacts with TET1; the interaction recruits SIN3A to gene promoters. The large PER complex involved in the histone deacetylation is composed of at least HDAC1, PER2, SFPQ and SIN3A. Interacts with KLF11. Interacts with PPHLN1. Found in a complex with YY1, GON4L and HDAC1. Interacts (via PAH2) with FOXK1. Interacts with FOXK2. Found in a complex composed of at least SINHCAF, SIN3A, HDAC1, SAP30, RBBP4, OGT and TET1. Interacts with SINHCAF. Interacts with SPHK2. SUMO1 sumoylated by TOPORS. Probably desumoylated by SENP2. Widely expressed. Highest levels in testis, lung and thymus. Expressed at relatively high levels throughout brain development. In adult mice, expression is high in neurogenic regions such as the subventricular zone, rostral migratory stream, olfactory bulb and dentate gyrus.

The protein resides in the nucleus. It localises to the nucleolus. Acts as a transcriptional repressor. Corepressor for REST. Interacts with MXI1 to repress MYC responsive genes and antagonize MYC oncogenic activities. Also interacts with MXD1-MAX heterodimers to repress transcription by tethering SIN3A to DNA. Acts cooperatively with OGT to repress transcription in parallel with histone deacetylation. Involved in the control of the circadian rhythms. Required for the transcriptional repression of circadian target genes, such as PER1, mediated by the large PER complex through histone deacetylation. Cooperates with FOXK1 to regulate cell cycle progression probably by repressing cell cycle inhibitor genes expression. Required for cortical neuron differentiation and callosal axon elongation. This is Paired amphipathic helix protein Sin3a (Sin3a) from Mus musculus (Mouse).